Reading from the N-terminus, the 272-residue chain is Shikimate dehydrogenase (NADP(+)) (272 aa).

Shikimate contacts are provided by residues 14-16 (SKS) and Thr-61. The active-site Proton acceptor is the Lys-65. Position 77 (Glu-77) interacts with NADP(+). Shikimate-binding residues include Asn-86 and Asp-102. NADP(+) contacts are provided by residues 126–130 (GAGGA), 149–154 (NRTVSR), and Met-213. Residue Tyr-215 participates in shikimate binding. Gly-237 provides a ligand contact to NADP(+).

The protein belongs to the shikimate dehydrogenase family. As to quaternary structure, homodimer.

It carries out the reaction shikimate + NADP(+) = 3-dehydroshikimate + NADPH + H(+). It participates in metabolic intermediate biosynthesis; chorismate biosynthesis; chorismate from D-erythrose 4-phosphate and phosphoenolpyruvate: step 4/7. Functionally, involved in the biosynthesis of the chorismate, which leads to the biosynthesis of aromatic amino acids. Catalyzes the reversible NADPH linked reduction of 3-dehydroshikimate (DHSA) to yield shikimate (SA). This Escherichia coli O7:K1 (strain IAI39 / ExPEC) protein is Shikimate dehydrogenase (NADP(+)).